The following is a 331-amino-acid chain: Lipoyl synthase (331 aa).

Over residues 1-14 the composition is skewed to polar residues; it reads MSTQLDASQPSNDV. The interval 1-32 is disordered; sequence MSTQLDASQPSNDVASPAAYDPTQKQKSQAKT. Residues C78, C83, C89, C104, C108, C111, and S318 each coordinate [4Fe-4S] cluster. One can recognise a Radical SAM core domain in the interval 89–307; sequence CFGKGTATFM…EREAYAMGFS (219 aa).

It belongs to the radical SAM superfamily. Lipoyl synthase family. It depends on [4Fe-4S] cluster as a cofactor.

It localises to the cytoplasm. It carries out the reaction [[Fe-S] cluster scaffold protein carrying a second [4Fe-4S](2+) cluster] + N(6)-octanoyl-L-lysyl-[protein] + 2 oxidized [2Fe-2S]-[ferredoxin] + 2 S-adenosyl-L-methionine + 4 H(+) = [[Fe-S] cluster scaffold protein] + N(6)-[(R)-dihydrolipoyl]-L-lysyl-[protein] + 4 Fe(3+) + 2 hydrogen sulfide + 2 5'-deoxyadenosine + 2 L-methionine + 2 reduced [2Fe-2S]-[ferredoxin]. The protein operates within protein modification; protein lipoylation via endogenous pathway; protein N(6)-(lipoyl)lysine from octanoyl-[acyl-carrier-protein]: step 2/2. Catalyzes the radical-mediated insertion of two sulfur atoms into the C-6 and C-8 positions of the octanoyl moiety bound to the lipoyl domains of lipoate-dependent enzymes, thereby converting the octanoylated domains into lipoylated derivatives. This is Lipoyl synthase from Bordetella avium (strain 197N).